A 232-amino-acid chain; its full sequence is Protein fmp52-1, mitochondrial (232 aa).

Residues Met1–Arg36 constitute a mitochondrion transit peptide.

Belongs to the FMP52 family.

It localises to the mitochondrion outer membrane. The protein is Protein fmp52-1, mitochondrial (fmp521) of Aspergillus terreus (strain NIH 2624 / FGSC A1156).